Here is a 462-residue protein sequence, read N- to C-terminus: Myb-like transcriptional regulator mfmK (462 aa).

HTH myb-type domains follow at residues 1–54, 56–110, and 113–162; these read MARL…WWNS, ADGT…DPGI, and CDWT…LKHE. 3 DNA-binding regions (H-T-H motif) span residues 32–52, 83–106, and 134–158; these read WRDL…RRWW, WSRV…SQVL, and WATI…STLR. A compositionally biased stretch (basic and acidic residues) spans 159–175; the sequence is LKHENESKRESTIRKSV. 3 disordered regions span residues 159–184, 216–262, and 374–408; these read LKHE…NFEP, DEEE…VDNG, and STTT…RTSI. The span at 216 to 235 shows a compositional bias: acidic residues; it reads DEEEDDDDDDEDNEEDDGDD. Polar residues-rich tracts occupy residues 374–385 and 396–408; these read STTTGMDSSSAP and FGTS…RTSI.

It is found in the nucleus. Functionally, myb-like transcriptional regulator; part of the gene cluster that mediates the biosynthesis of the phthalide-terpenoid hybrid 11'-O-desmethylfendlerol. This Annulohypoxylon moriforme (Filamentous fungus) protein is Myb-like transcriptional regulator mfmK.